Here is an 816-residue protein sequence, read N- to C-terminus: Fibroblast growth factor receptor (816 aa).

Positions 1–19 (MISDWCVVLVLLMSRLVFG) are cleaved as a signal peptide. Residues 20–370 (LNFTEPVNYI…YKEESVEKTV (351 aa)) are Extracellular-facing. 9 N-linked (GlcNAc...) asparagine glycosylation sites follow: Asn-21, Asn-69, Asn-119, Asn-156, Asn-171, Asn-244, Asn-274, Asn-313, and Asn-321. The Ig-like C2-type 1 domain occupies 25-105 (PVNYILKLGE…VTAMNEESVQ (81 aa)). Cys-43 and Cys-94 are joined by a disulfide. The region spanning 126–217 (LRIKNDISLL…GKIEHIMTVE (92 aa)) is the Ig-like C2-type 2 domain. A disulfide bridge links Cys-147 with Cys-201. Residues 371–391 (IFIVITSMLAGLIFVAFVIFF) traverse the membrane as a helical segment. Over 392–816 (ICRVRSKDKF…DILLSHYAVS (425 aa)) the chain is Cytoplasmic. In terms of domain architecture, Protein kinase spans 474 to 747 (LETDCLLGEG…QLIEDLERML (274 aa)). ATP contacts are provided by residues 480 to 488 (LGEGAFGRV) and Lys-508. Catalysis depends on Asp-612, which acts as the Proton acceptor. Phosphotyrosine; by autocatalysis is present on Tyr-643.

The protein belongs to the protein kinase superfamily. Tyr protein kinase family. Fibroblast growth factor receptor subfamily.

It is found in the membrane. It catalyses the reaction L-tyrosyl-[protein] + ATP = O-phospho-L-tyrosyl-[protein] + ADP + H(+). Receptor for basic fibroblast growth factor. This Hydra vulgaris (Hydra) protein is Fibroblast growth factor receptor (FGFR).